The sequence spans 127 residues: Large ribosomal subunit protein uL18 (127 aa).

This sequence belongs to the universal ribosomal protein uL18 family. In terms of assembly, part of the 50S ribosomal subunit; part of the 5S rRNA/L5/L18/L25 subcomplex. Contacts the 5S and 23S rRNAs.

Its function is as follows. This is one of the proteins that bind and probably mediate the attachment of the 5S RNA into the large ribosomal subunit, where it forms part of the central protuberance. This Streptomyces avermitilis (strain ATCC 31267 / DSM 46492 / JCM 5070 / NBRC 14893 / NCIMB 12804 / NRRL 8165 / MA-4680) protein is Large ribosomal subunit protein uL18.